The primary structure comprises 284 residues: Urease accessory protein UreD (284 aa).

The tract at residues M1–R28 is disordered.

Belongs to the UreD family. UreD, UreF and UreG form a complex that acts as a GTP-hydrolysis-dependent molecular chaperone, activating the urease apoprotein by helping to assemble the nickel containing metallocenter of UreC. The UreE protein probably delivers the nickel.

It localises to the cytoplasm. In terms of biological role, required for maturation of urease via the functional incorporation of the urease nickel metallocenter. This chain is Urease accessory protein UreD, found in Agrobacterium fabrum (strain C58 / ATCC 33970) (Agrobacterium tumefaciens (strain C58)).